A 244-amino-acid polypeptide reads, in one-letter code: Orotidine 5'-phosphate decarboxylase (244 aa).

Substrate-binding positions include aspartate 12, lysine 34, 61-70, threonine 125, arginine 187, glutamine 196, glycine 216, and arginine 217; that span reads DLKLFDIPNT. Lysine 63 functions as the Proton donor in the catalytic mechanism.

This sequence belongs to the OMP decarboxylase family. Type 1 subfamily. As to quaternary structure, homodimer.

The catalysed reaction is orotidine 5'-phosphate + H(+) = UMP + CO2. It functions in the pathway pyrimidine metabolism; UMP biosynthesis via de novo pathway; UMP from orotate: step 2/2. Functionally, catalyzes the decarboxylation of orotidine 5'-monophosphate (OMP) to uridine 5'-monophosphate (UMP). The sequence is that of Orotidine 5'-phosphate decarboxylase from Dictyoglomus turgidum (strain DSM 6724 / Z-1310).